The primary structure comprises 445 residues: Transmembrane protein 184C (445 aa).

The next 7 membrane-spanning stretches (helical) occupy residues 15 to 35 (LVVLLYIVGLLVVVPLCVWEL), 46 to 66 (AWFIAGIFLLMTIPISLWGIL), 84 to 104 (ILWMVPIYSLDSWIALKYPNI), 177 to 197 (YTVVRPFTTIIALICELVGVY), 210 to 230 (YLVILNNMSQLFAMYCLVLFY), 252 to 272 (VVFVSFWQAVLIALLVKVGVI), and 285 to 305 (AVATGLQDFIICVEMFLAAIA). Disordered regions lie at residues 369–393 (EHTSLLSSSTQDPISDASSMPSSPM) and 421–445 (TSATRDTEESPELMHNSSEKALDRS). Over residues 370–390 (HTSLLSSSTQDPISDASSMPS) the composition is skewed to polar residues.

The protein belongs to the TMEM184 family.

Its subcellular location is the membrane. Functionally, may play a role in cell growth. In Gallus gallus (Chicken), this protein is Transmembrane protein 184C (TMEM184C).